Reading from the N-terminus, the 833-residue chain is Neurogenic locus protein delta (833 aa).

Positions 1–18 (MHWIKCLLTAFICFTVIV) are cleaved as a signal peptide. Residues 19 to 594 (QVHSSGSFEL…ARADGLTNAQ (576 aa)) are Extracellular-facing. 2 cysteine pairs are disulfide-bonded: C46–C61 and C68–C82. N-linked (GlcNAc...) asparagine glycosylation is found at N98, N137, and N167. A DSL domain is found at 182–226 (VTCDLNYYGSGCAKFCRPRDDSFGHSTCSETGEIICLTGWQGDYC). Intrachain disulfides connect C184-C193, C197-C209, C217-C226, C231-C240, C235-C246, C248-C257, C260-C271, C266-C277, C279-C288, C295-C307, C301-C317, C319-C328, C335-C348, C342-C360, C362-C371, C378-C388, C383-C404, C406-C415, C422-C433, C427-C439, C441-C450, C457-C468, C462-C477, C479-C488, C495-C506, C500-C515, C517-C526, C533-C544, C538-C553, and C555-C564. EGF-like domains are found at residues 227–258 (HIPK…ALCN), 256–289 (LCNE…LYCN), 291–329 (DLNY…DDCE), 331–372 (EIYS…KMCE), 374–416 (KVLT…PNCD), and 418–451 (QLDN…TRCE). Residues 453–489 (NIDDCLGHQCENGGTCIDMVNQYRCQCVPGFHGTHCS) enclose the EGF-like 7; calcium-binding domain. In terms of domain architecture, EGF-like 8 spans 491-527 (KVDLCLIRPCANGGTCLNLNNDYQCTCRAGFTGKDCS). Positions 529–565 (DIDECSSGPCHNGGTCMNRVNSFECVCANGFRGKQCD) constitute an EGF-like 9; calcium-binding domain. Residues 595 to 617 (VVLIAVFSVAMPLVAVIAACVVF) traverse the membrane as a helical segment. Topologically, residues 618 to 833 (CMKRKRKRAQ…RSVVCGTPHM (216 aa)) are cytoplasmic. Position 666 is a phosphothreonine (T666). Residues 743–773 (QLNTDPTLMHRGSPAGSSAKGASGGGPGAAE) form a disordered region. The span at 754-763 (GSPAGSSAKG) shows a compositional bias: low complexity.

As to quaternary structure, interacts with Notch (N) via the EGF repeats and the N EGF repeats. Ubiquitinated by Mib, leading to its endocytosis and subsequent degradation. In terms of tissue distribution, detected in all areas with neurogenic abilities, for example the neurogenic ectoderm and the primordia of the sense organs. Later expression is restricted to those cells that have adopted a neural fate.

The protein localises to the membrane. Its function is as follows. Acts as a ligand for Notch (N) receptor. Essential for proper differentiation of ectoderm. Delta is required for the correct separation of neural and epidermal cell lineages. Fringe (fng) acts in the Golgi to determine the type of O-linked fucose on the EGF modules in N, altering the ability of N to bind with Delta. O-fut1 also has a role in modulating the interaction. This chain is Neurogenic locus protein delta, found in Drosophila melanogaster (Fruit fly).